A 365-amino-acid chain; its full sequence is tRNA-specific 2-thiouridylase MnmA (365 aa).

Residues 14–21 (AMSGGVDS) and L40 each bind ATP. The active-site Nucleophile is C108. A disulfide bridge connects residues C108 and C204. ATP is bound at residue G132. Positions 154 to 156 (KDQ) are interaction with tRNA. C204 serves as the catalytic Cysteine persulfide intermediate.

This sequence belongs to the MnmA/TRMU family.

Its subcellular location is the cytoplasm. It catalyses the reaction S-sulfanyl-L-cysteinyl-[protein] + uridine(34) in tRNA + AH2 + ATP = 2-thiouridine(34) in tRNA + L-cysteinyl-[protein] + A + AMP + diphosphate + H(+). Its function is as follows. Catalyzes the 2-thiolation of uridine at the wobble position (U34) of tRNA, leading to the formation of s(2)U34. This is tRNA-specific 2-thiouridylase MnmA from Rickettsia massiliae (strain Mtu5).